Reading from the N-terminus, the 391-residue chain is Na(+)/H(+) antiporter NhaA (391 aa).

The next 11 membrane-spanning stretches (helical) occupy residues 14-34, 59-79, 95-115, 124-144, 154-174, 177-197, 213-233, 261-281, 290-310, 328-348, and 363-383; these read AGGILLLVAVVFAMLMANSPL, LLLWINDGLMALFFLLIGLEV, SLPSFAAIGGMLVPAGIYLLF, AGWAIPAATDIAFALGIMALL, VFLLALAIIDDLGVIVIIALF, SDLSTISLAIASVAILGLVGL, LILWVAVLKSGVHATLAGVII, FLILPVFAFANAGVALGNMSL, IGIALGLILGKPIGVMLFSFI, IAPVAAMCGIGFTMSMFIASL, and LGTLIGSFIAALVGYFWLSKV.

It belongs to the NhaA Na(+)/H(+) (TC 2.A.33) antiporter family.

Its subcellular location is the cell inner membrane. The catalysed reaction is Na(+)(in) + 2 H(+)(out) = Na(+)(out) + 2 H(+)(in). Na(+)/H(+) antiporter that extrudes sodium in exchange for external protons. This Shewanella putrefaciens (strain CN-32 / ATCC BAA-453) protein is Na(+)/H(+) antiporter NhaA.